The primary structure comprises 139 residues: Ribosome-binding factor A (139 aa).

The segment at 120-139 (PENLLAVEDNTDEDDESFSE) is disordered. Residues 128–139 (DNTDEDDESFSE) are compositionally biased toward acidic residues.

It belongs to the RbfA family. Monomer. Binds 30S ribosomal subunits, but not 50S ribosomal subunits or 70S ribosomes.

The protein localises to the cytoplasm. In terms of biological role, one of several proteins that assist in the late maturation steps of the functional core of the 30S ribosomal subunit. Associates with free 30S ribosomal subunits (but not with 30S subunits that are part of 70S ribosomes or polysomes). Required for efficient processing of 16S rRNA. May interact with the 5'-terminal helix region of 16S rRNA. In Nostoc punctiforme (strain ATCC 29133 / PCC 73102), this protein is Ribosome-binding factor A.